The chain runs to 328 residues: DNA-directed RNA polymerase subunit alpha 1 (328 aa).

Positions 1 to 234 are alpha N-terminal domain (alpha-NTD); that stretch reads MQGFVKDFLK…GQLDEFVDER (234 aa). Residues 248 to 328 form an alpha C-terminal domain (alpha-CTD) region; the sequence is FDPILLRPVN…NWPPASLIED (81 aa).

This sequence belongs to the RNA polymerase alpha chain family. In terms of assembly, homodimer. The RNAP catalytic core consists of 2 alpha, 1 beta, 1 beta' and 1 omega subunit. When a sigma factor is associated with the core the holoenzyme is formed, which can initiate transcription.

It carries out the reaction RNA(n) + a ribonucleoside 5'-triphosphate = RNA(n+1) + diphosphate. DNA-dependent RNA polymerase catalyzes the transcription of DNA into RNA using the four ribonucleoside triphosphates as substrates. This is DNA-directed RNA polymerase subunit alpha 1 from Psychromonas ingrahamii (strain DSM 17664 / CCUG 51855 / 37).